The primary structure comprises 442 residues: Testican-1 (442 aa).

Positions M1–S21 are cleaved as a signal peptide. Cystine bridges form between C89–C100, C94–C110, C139–C169, C142–C162, C151–C183, C316–C340, C351–C358, and C360–C379. Positions P133–C185 constitute a Kazal-like domain. The region spanning G313–C379 is the Thyroglobulin type-1 domain. Disordered stretches follow at residues G375–V395 and T420–W442. O-linked (Xyl...) (glycosaminoglycan) serine glycosylation is found at S386 and S391. Positions E425 to W442 are enriched in acidic residues.

Post-translationally, contains chondroitin sulfate and heparan sulfate O-linked oligosaccharides. As to expression, predominantly expressed in the postsynaptic area of pyramidal neurons.

It localises to the secreted. The protein localises to the extracellular space. It is found in the extracellular matrix. Functionally, may play a role in cell-cell and cell-matrix interactions. May contribute to various neuronal mechanisms in the central nervous system. The polypeptide is Testican-1 (Spock1) (Mus musculus (Mouse)).